We begin with the raw amino-acid sequence, 217 residues long: Large ribosomal subunit protein uL3 (217 aa).

The protein belongs to the universal ribosomal protein uL3 family. In terms of assembly, part of the 50S ribosomal subunit. Forms a cluster with proteins L14 and L19.

In terms of biological role, one of the primary rRNA binding proteins, it binds directly near the 3'-end of the 23S rRNA, where it nucleates assembly of the 50S subunit. This chain is Large ribosomal subunit protein uL3, found in Mycobacterium ulcerans (strain Agy99).